Consider the following 530-residue polypeptide: Na(+)/H(+) antiporter NhaB (530 aa).

The next 13 helical transmembrane spans lie at 13–33 (FLGK…IINP), 34–54 (FVFF…EFIF), 64–84 (PLQP…TSPA), 90–110 (LVAN…IYFM), 113–133 (LLLY…LLSL), 136–156 (CLMA…AVVI), 205–225 (LLMH…VGEP), 234–254 (AGWL…PVFM), 306–326 (ALIA…VGLI), 351–371 (EEAL…AVII), 378–400 (PIIS…IANG), 450–470 (ATPN…APLI), and 481–501 (ALPY…FMLL).

The protein belongs to the NhaB Na(+)/H(+) (TC 2.A.34) antiporter family.

It is found in the cell inner membrane. The catalysed reaction is 2 Na(+)(in) + 3 H(+)(out) = 2 Na(+)(out) + 3 H(+)(in). Functionally, na(+)/H(+) antiporter that extrudes sodium in exchange for external protons. The chain is Na(+)/H(+) antiporter NhaB from Photobacterium profundum (strain SS9).